The following is a 183-amino-acid chain: Small ribosomal subunit protein bS16 (183 aa).

The span at E149–A161 shows a compositional bias: basic and acidic residues. Residues E149 to A183 are disordered. Residues E162–A183 are compositionally biased toward low complexity.

It belongs to the bacterial ribosomal protein bS16 family.

This Phocaeicola vulgatus (strain ATCC 8482 / DSM 1447 / JCM 5826 / CCUG 4940 / NBRC 14291 / NCTC 11154) (Bacteroides vulgatus) protein is Small ribosomal subunit protein bS16.